The chain runs to 193 residues: T-cell receptor-associated transmembrane adapter 1 (193 aa).

Over 1–10 (MSGNAECHFS) the chain is Extracellular. A helical; Signal-anchor for type III membrane protein transmembrane segment spans residues 11-31 (IWAILAFLGLALTISLIFNIF). The Cytoplasmic portion of the chain corresponds to 32 to 193 (HCVEKQRQEK…LHSLDYDLAQ (162 aa)). At serine 46 the chain carries Phosphoserine. Tyrosine 80 carries the post-translational modification Phosphotyrosine. The interaction with PIK3R1 stretch occupies residues 80 to 83 (YEQM). The disordered stretch occupies residues 116 to 166 (NEGKRRKPRKQKSHLSDKDEEGQMHAKDISLSKTTLVDSYPPESEAIEENI). The span at 119-128 (KRRKPRKQKS) shows a compositional bias: basic residues. The segment covering 129 to 145 (HLSDKDEEGQMHAKDIS) has biased composition (basic and acidic residues).

As to quaternary structure, homodimer; disulfide-linked. Interacts with CD3Z. When phosphorylated, interacts with PIK3R1. Phosphorylated on tyrosines upon TCR activation.

Its subcellular location is the cell membrane. Its function is as follows. Stabilizes the TCR (T-cell antigen receptor)/CD3 complex at the surface of T-cells. The sequence is that of T-cell receptor-associated transmembrane adapter 1 (TRAT1) from Bos taurus (Bovine).